The chain runs to 147 residues: 16 kDa phloem protein 2 (147 aa).

The region spanning 1–103 (MPHGTLEVVL…FVEGSIPPTA (103 aa)) is the C2 domain. Ca(2+) is bound by residues Asp-20, Asp-26, Asp-73, Asp-75, and Asp-81. The disordered stretch occupies residues 126–147 (ENRSRGMDEESYGGWKNSEASY).

The cofactor is Ca(2+).

Its function is as follows. Binds to both sense and antisense RNA. Can also bind sheared DNA and dodecamer DNA with a low affinity. Interacts with mesophyll plasmodesmata to mediate its own cell-to-cell transport and potentiate RNA trafficking. May play a role in plant defense signaling. This chain is 16 kDa phloem protein 2, found in Arabidopsis thaliana (Mouse-ear cress).